We begin with the raw amino-acid sequence, 304 residues long: DDRGK domain-containing protein 1 (304 aa).

The Lumenal segment spans residues 1–2; that stretch reads MD. The chain crosses the membrane as a helical span at residues 3-23; the sequence is LIILVGIAIALLVVIISLYLL. At 24 to 304 the chain is on the cytoplasmic side; that stretch reads QKKNSTTEAK…LTPVSAEGSS (281 aa). Residues 31–174 form a disordered region; the sequence is EAKPAAAAPQ…AERLAKEERE (144 aa). Positions 53-82 are enriched in low complexity; sequence RRAQIARNQRNRLRQNAPVAAAAPQAEAPA. Residues 105 to 174 show a composition bias toward basic and acidic residues; the sequence is LDEKMGAKKR…AERLAKEERE (70 aa).

This sequence belongs to the DDRGK1 family. In terms of assembly, interacts with Atg9; the interaction is transient.

It is found in the endoplasmic reticulum membrane. Its function is as follows. Substrate adapter for ufmylation, the covalent attachment of the ubiquitin-like modifier UFM1 to substrate proteins. Required for ufmylation of Atg9; protects the nervous system during aging, possibly by stabilizing Atg9 and supporting its function. This is DDRGK domain-containing protein 1 from Drosophila ananassae (Fruit fly).